A 150-amino-acid chain; its full sequence is Ribonuclease H (150 aa).

The RNase H type-1 domain maps to 3–144; sequence DKDMIEIWTD…ADGLARKGTD (142 aa). Mg(2+) is bound by residues D12, E50, D72, and D136. Residues 129–150 are disordered; the sequence is DEGNERADGLARKGTDEVRGRK.

It belongs to the RNase H family. As to quaternary structure, monomer. Requires Mg(2+) as cofactor.

The protein resides in the cytoplasm. The catalysed reaction is Endonucleolytic cleavage to 5'-phosphomonoester.. In terms of biological role, endonuclease that specifically degrades the RNA of RNA-DNA hybrids. The sequence is that of Ribonuclease H from Hyphomonas neptunium (strain ATCC 15444).